A 396-amino-acid polypeptide reads, in one-letter code: Elongation factor Tu (396 aa).

In terms of domain architecture, tr-type G spans 10–206 (KPHCNIGTIG…AVDAYIPQPE (197 aa)). A G1 region spans residues 19–26 (GHVDHGKT). 19–26 (GHVDHGKT) serves as a coordination point for GTP. Residue threonine 26 participates in Mg(2+) binding. The G2 stretch occupies residues 60 to 64 (GITIS). Positions 81-84 (DCPG) are G3. Residues 81–85 (DCPGH) and 136–139 (NKVD) each bind GTP. Residues 136 to 139 (NKVD) are G4. Residues 174 to 176 (SAL) form a G5 region.

The protein belongs to the TRAFAC class translation factor GTPase superfamily. Classic translation factor GTPase family. EF-Tu/EF-1A subfamily. Monomer.

The protein resides in the cytoplasm. The catalysed reaction is GTP + H2O = GDP + phosphate + H(+). GTP hydrolase that promotes the GTP-dependent binding of aminoacyl-tRNA to the A-site of ribosomes during protein biosynthesis. The polypeptide is Elongation factor Tu (Gluconacetobacter diazotrophicus (strain ATCC 49037 / DSM 5601 / CCUG 37298 / CIP 103539 / LMG 7603 / PAl5)).